A 354-amino-acid polypeptide reads, in one-letter code: UDP-3-O-acylglucosamine N-acyltransferase (354 aa).

Residue H245 is the Proton acceptor of the active site.

It belongs to the transferase hexapeptide repeat family. LpxD subfamily. In terms of assembly, homotrimer.

It catalyses the reaction a UDP-3-O-[(3R)-3-hydroxyacyl]-alpha-D-glucosamine + a (3R)-hydroxyacyl-[ACP] = a UDP-2-N,3-O-bis[(3R)-3-hydroxyacyl]-alpha-D-glucosamine + holo-[ACP] + H(+). It functions in the pathway bacterial outer membrane biogenesis; LPS lipid A biosynthesis. Catalyzes the N-acylation of UDP-3-O-acylglucosamine using 3-hydroxyacyl-ACP as the acyl donor. Is involved in the biosynthesis of lipid A, a phosphorylated glycolipid that anchors the lipopolysaccharide to the outer membrane of the cell. The polypeptide is UDP-3-O-acylglucosamine N-acyltransferase (Anaeromyxobacter dehalogenans (strain 2CP-1 / ATCC BAA-258)).